Reading from the N-terminus, the 82-residue chain is Host transcription reprogramming factor 10 (82 aa).

The signal sequence occupies residues 1–19; sequence MQIFNMVSLVALFALGATA. The segment at 57 to 81 adopts a C2H2-type zinc-finger fold; sequence WVCHACNKQFTTPAALQKHKDTVVH.

It is found in the secreted. The protein localises to the host nucleus. Functionally, probable secreted effector that translocates into the nuclei of host cells to reprogram the expression of targeted genes by binding on effector binding elements in rice. This Pyricularia oryzae (strain 70-15 / ATCC MYA-4617 / FGSC 8958) (Rice blast fungus) protein is Host transcription reprogramming factor 10.